A 380-amino-acid polypeptide reads, in one-letter code: uncharacterized protein (380 aa).

2 disordered regions span residues 278-323 (AATI…PRVA) and 345-368 (SLPG…RPRR). A compositionally biased stretch (basic residues) spans 301-319 (RNGPRRPARRGTSRGRRCA).

This is an uncharacterized protein from Mycobacterium tuberculosis (strain CDC 1551 / Oshkosh).